Here is a 690-residue protein sequence, read N- to C-terminus: Wilms tumor protein 1-interacting protein homolog (690 aa).

Disordered regions lie at residues Met151 to Arg316 and Thr328 to Ser372. Residues Ser152–Ser186 show a composition bias toward low complexity. 4 stretches are compositionally biased toward polar residues: residues Glu204–Gly214, Pro223–Asp233, Pro240–Ile261, and Pro272–Asp292. Low complexity predominate over residues Ser335–Ser357. 3 LIM zinc-binding domains span residues Gly479–Gln540, Asp544–Ala603, and Pro604–Val673.

Belongs to the zyxin/ajuba family. As to quaternary structure, interacts with prickle3.

Its subcellular location is the cell junction. The protein resides in the adherens junction. The protein localises to the nucleus. In terms of biological role, may monitor slit diaphragm protein assembly, a specialized adherens junction characteristic of podocytes. In case of podocyte injury, it shuttles into the nucleus and acts as a transcription regulator. Plays a role in the regulation of cell morphology and cytoskeletal organization. Acts as a transcriptional corepressor for snai1 and snai2/slug and plays a role in regulating neural crest development. Involved in the organization of the basal body. Involved in cilia growth and positioning. The chain is Wilms tumor protein 1-interacting protein homolog (wtip) from Xenopus laevis (African clawed frog).